We begin with the raw amino-acid sequence, 250 residues long: Cobalt transport protein CbiM (250 aa).

The first 25 residues, 1-25 (MKQNIKLGVIAALMLIVLTPVTSNA), serve as a signal peptide directing secretion. The next 6 helical transmembrane spans lie at 33–53 (LPVKWSIAWGVIFIPFFLVGL), 68–88 (VLLALCGAFVFVLSALKIPSV), 100–120 (LGAIMFGPSVMFVLGTIVLIF), 132–152 (TLGANAFSMAIIGPIISFLIF), 163–183 (AMPVFLAAAIGDLATYTVTSI), and 205–225 (GIFFMTQIPIAIAEGILTVIV).

Belongs to the CbiM family. As to quaternary structure, forms an energy-coupling factor (ECF) transporter complex composed of an ATP-binding protein (A component, CbiO), a transmembrane protein (T component, CbiQ) and 2 possible substrate-capture proteins (S components, CbiM and CbiN) of unknown stoichimetry.

It is found in the cell membrane. Its pathway is cofactor biosynthesis; adenosylcobalamin biosynthesis. In terms of biological role, part of the energy-coupling factor (ECF) transporter complex CbiMNOQ involved in cobalt import. In Clostridioides difficile (strain R20291) (Peptoclostridium difficile), this protein is Cobalt transport protein CbiM.